A 273-amino-acid polypeptide reads, in one-letter code: Cytosolic sulfotransferase 4 (273 aa).

74 to 79 (KCGTTW) is a 3'-phosphoadenylyl sulfate binding site. Catalysis depends on histidine 121, which acts as the Proton acceptor. 3'-phosphoadenylyl sulfate contacts are provided by residues arginine 143 and 239 to 241 (RKG).

Belongs to the sulfotransferase 1 family.

Its subcellular location is the cytoplasm. Sulfotransferase that utilizes 3'-phospho-5'-adenylyl sulfate (PAPS) as sulfonate donor. The protein is Cytosolic sulfotransferase 4 (SOT4) of Arabidopsis thaliana (Mouse-ear cress).